We begin with the raw amino-acid sequence, 429 residues long: Asparagine--tRNA ligase (429 aa).

This sequence belongs to the class-II aminoacyl-tRNA synthetase family.

It localises to the cytoplasm. It catalyses the reaction tRNA(Asn) + L-asparagine + ATP = L-asparaginyl-tRNA(Asn) + AMP + diphosphate + H(+). In Thermoplasma acidophilum (strain ATCC 25905 / DSM 1728 / JCM 9062 / NBRC 15155 / AMRC-C165), this protein is Asparagine--tRNA ligase.